We begin with the raw amino-acid sequence, 654 residues long: Acetyl-coenzyme A synthetase (654 aa).

Residues 191-194 and T315 each bind CoA; that span reads RRGQ. Residues 391–393, 415–420, D506, and R521 each bind ATP; these read GEP and DTWWQT. S529 serves as a coordination point for CoA. An ATP-binding site is contributed by R532. Mg(2+) is bound by residues V543, H545, and V548. K615 carries the post-translational modification N6-acetyllysine.

This sequence belongs to the ATP-dependent AMP-binding enzyme family. The cofactor is Mg(2+). Post-translationally, acetylated. Deacetylation by the SIR2-homolog deacetylase activates the enzyme.

It catalyses the reaction acetate + ATP + CoA = acetyl-CoA + AMP + diphosphate. In terms of biological role, catalyzes the conversion of acetate into acetyl-CoA (AcCoA), an essential intermediate at the junction of anabolic and catabolic pathways. AcsA undergoes a two-step reaction. In the first half reaction, AcsA combines acetate with ATP to form acetyl-adenylate (AcAMP) intermediate. In the second half reaction, it can then transfer the acetyl group from AcAMP to the sulfhydryl group of CoA, forming the product AcCoA. This chain is Acetyl-coenzyme A synthetase, found in Gemmatimonas aurantiaca (strain DSM 14586 / JCM 11422 / NBRC 100505 / T-27).